A 706-amino-acid polypeptide reads, in one-letter code: Protein kinase C theta type (706 aa).

One can recognise a C2 domain in the interval 1–107; that stretch reads MSPFLRIGLS…KNNGKTEIWL (107 aa). Residue Tyr90 is modified to Phosphotyrosine; by LCK. Residues 159 to 209 form a Phorbol-ester/DAG-type 1 zinc finger; that stretch reads CHEFTATFFPQPTFCSVCHEFVWGLNKQGYQCRQCNAAIHKKCIDKVIAKC. At Thr219 the chain carries Phosphothreonine; by autocatalysis. The Phorbol-ester/DAG-type 2 zinc-finger motif lies at 231–281; sequence PHRFKVYNYKSPTFCEHCGTLLWGLARQGLKCDACGMNVHHRCQTKVANLC. Ser348 is subject to Phosphoserine. The 255-residue stretch at 380-634 folds into the Protein kinase domain; it reads FILHKMLGKG…RGDIRQHPLF (255 aa). ATP contacts are provided by residues 386-394 and Lys409; that span reads LGKGSFGKV. Asp504 (proton acceptor) is an active-site residue. Thr538 is subject to Phosphothreonine; by PDPK1. One can recognise an AGC-kinase C-terminal domain in the interval 635–706; it reads REINWEELER…MNPGMERLIS (72 aa). Ser676, Ser685, and Ser695 each carry phosphoserine.

It belongs to the protein kinase superfamily. AGC Ser/Thr protein kinase family. PKC subfamily. As to quaternary structure, part of a lipid raft complex composed at least of BCL10, CARD11, MALT1 and IKBKB. Interacts with GLRX3 (via N-terminus). Interacts with ECT2. Interacts with CCDC88A/GIV; the interaction leads to phosphorylation of CCDC88A and inhibition of its guanine nucleotide exchange factor activity. Interacts with PRKCH upstream open reading frame 2; the interaction leads to inhibition of kinase activity. Interacts with CD28. Mg(2+) serves as cofactor. Post-translationally, autophosphorylation at Thr-219 is required for targeting to the TCR and cellular function of PRKCQ upon antigen receptor ligation. Following TCR stimulation, phosphorylated at Tyr-90 and Ser-685. In terms of tissue distribution, expressed in skeletal muscle, T-cells, megakaryoblastic cells and platelets.

The protein resides in the cytoplasm. It localises to the cell membrane. The catalysed reaction is L-seryl-[protein] + ATP = O-phospho-L-seryl-[protein] + ADP + H(+). The enzyme catalyses L-threonyl-[protein] + ATP = O-phospho-L-threonyl-[protein] + ADP + H(+). With respect to regulation, novel PKCs (PRKCD, PRKCE, PRKCH and PRKCQ) are calcium-insensitive, but activated by diacylglycerol (DAG) and phosphatidylserine. Three specific sites; Thr-538 (activation loop of the kinase domain), Ser-676 (turn motif) and Ser-695 (hydrophobic region), need to be phosphorylated for its full activation. Inhibited by PRKCH upstream open reading frame 2. Functionally, calcium-independent, phospholipid- and diacylglycerol (DAG)-dependent serine/threonine-protein kinase that mediates non-redundant functions in T-cell receptor (TCR) signaling, including T-cells activation, proliferation, differentiation and survival, by mediating activation of multiple transcription factors such as NF-kappa-B, JUN, NFATC1 and NFATC2. In TCR-CD3/CD28-co-stimulated T-cells, is required for the activation of NF-kappa-B and JUN, which in turn are essential for IL2 production, and participates in the calcium-dependent NFATC1 and NFATC2 transactivation. Mediates the activation of the canonical NF-kappa-B pathway (NFKB1) by direct phosphorylation of CARD11 on several serine residues, inducing CARD11 association with lipid rafts and recruitment of the BCL10-MALT1 complex, which then activates IKK complex, resulting in nuclear translocation and activation of NFKB1. May also play an indirect role in activation of the non-canonical NF-kappa-B (NFKB2) pathway. In the signaling pathway leading to JUN activation, acts by phosphorylating the mediator STK39/SPAK and may not act through MAP kinases signaling. Plays a critical role in TCR/CD28-induced NFATC1 and NFATC2 transactivation by participating in the regulation of reduced inositol 1,4,5-trisphosphate generation and intracellular calcium mobilization. After costimulation of T-cells through CD28 can phosphorylate CBLB and is required for the ubiquitination and subsequent degradation of CBLB, which is a prerequisite for the activation of TCR. During T-cells differentiation, plays an important role in the development of T-helper 2 (Th2) cells following immune and inflammatory responses, and, in the development of inflammatory autoimmune diseases, is necessary for the activation of IL17-producing Th17 cells. May play a minor role in Th1 response. Upon TCR stimulation, mediates T-cell protective survival signal by phosphorylating BAD, thus protecting T-cells from BAD-induced apoptosis, and by up-regulating BCL-X(L)/BCL2L1 levels through NF-kappa-B and JUN pathways. In platelets, regulates signal transduction downstream of the ITGA2B, CD36/GP4, F2R/PAR1 and F2RL3/PAR4 receptors, playing a positive role in 'outside-in' signaling and granule secretion signal transduction. May relay signals from the activated ITGA2B receptor by regulating the uncoupling of WASP and WIPF1, thereby permitting the regulation of actin filament nucleation and branching activity of the Arp2/3 complex. May mediate inhibitory effects of free fatty acids on insulin signaling by phosphorylating IRS1, which in turn blocks IRS1 tyrosine phosphorylation and downstream activation of the PI3K/AKT pathway. Phosphorylates MSN (moesin) in the presence of phosphatidylglycerol or phosphatidylinositol. Phosphorylates PDPK1 at 'Ser-504' and 'Ser-532' and negatively regulates its ability to phosphorylate PKB/AKT1. Phosphorylates CCDC88A/GIV and inhibits its guanine nucleotide exchange factor activity. Phosphorylates and activates LRRK1, which phosphorylates RAB proteins involved in intracellular trafficking. The polypeptide is Protein kinase C theta type (PRKCQ) (Homo sapiens (Human)).